Reading from the N-terminus, the 361-residue chain is Peptide chain release factor 1 (361 aa).

At Q238 the chain carries N5-methylglutamine.

The protein belongs to the prokaryotic/mitochondrial release factor family. Post-translationally, methylated by PrmC. Methylation increases the termination efficiency of RF1.

Its subcellular location is the cytoplasm. Peptide chain release factor 1 directs the termination of translation in response to the peptide chain termination codons UAG and UAA. This Mesomycoplasma hyopneumoniae (strain 232) (Mycoplasma hyopneumoniae) protein is Peptide chain release factor 1.